A 365-amino-acid chain; its full sequence is Carbamoyl phosphate synthase small chain (365 aa).

CPSase stretches follow at residues 1–166 (MKRQ…PSPG) and 1–169 (MKRQ…GRGH). Positions 45, 218, and 220 each coordinate L-glutamine. The region spanning 170–357 (RVVLVDFGMK…LTMIENFKKE (188 aa)) is the Glutamine amidotransferase type-1 domain. Catalysis depends on cysteine 245, which acts as the Nucleophile. L-glutamine is bound by residues leucine 246, glutamine 249, asparagine 287, glycine 289, and tyrosine 290. Active-site residues include histidine 330 and glutamate 332.

The protein belongs to the CarA family. In terms of assembly, composed of two chains; the small (or glutamine) chain promotes the hydrolysis of glutamine to ammonia, which is used by the large (or ammonia) chain to synthesize carbamoyl phosphate. Tetramer of heterodimers (alpha,beta)4.

It catalyses the reaction hydrogencarbonate + L-glutamine + 2 ATP + H2O = carbamoyl phosphate + L-glutamate + 2 ADP + phosphate + 2 H(+). It carries out the reaction L-glutamine + H2O = L-glutamate + NH4(+). The protein operates within amino-acid biosynthesis; L-arginine biosynthesis; carbamoyl phosphate from bicarbonate: step 1/1. It functions in the pathway pyrimidine metabolism; UMP biosynthesis via de novo pathway; (S)-dihydroorotate from bicarbonate: step 1/3. Small subunit of the glutamine-dependent carbamoyl phosphate synthetase (CPSase). CPSase catalyzes the formation of carbamoyl phosphate from the ammonia moiety of glutamine, carbonate, and phosphate donated by ATP, constituting the first step of 2 biosynthetic pathways, one leading to arginine and/or urea and the other to pyrimidine nucleotides. The small subunit (glutamine amidotransferase) binds and cleaves glutamine to supply the large subunit with the substrate ammonia. The chain is Carbamoyl phosphate synthase small chain from Bacillus cereus (strain ATCC 10987 / NRS 248).